The primary structure comprises 481 residues: Cys-Gly metallodipeptidase DUG1 (481 aa).

A Zn(2+)-binding site is contributed by His102. The active site involves Asp104. Residue Asp137 coordinates Zn(2+). Glu171 (proton acceptor) is an active-site residue. Residues Glu172, Asp200, and His450 each contribute to the Zn(2+) site. Ser451 carries the post-translational modification Phosphoserine.

The protein belongs to the peptidase M20A family. Homodimer. Component of the GSH degradosomal complex composed of at least DUG1, DUG2 and DUG3. Requires Zn(2+) as cofactor. Mn(2+) is required as a cofactor.

The protein resides in the cytoplasm. The protein localises to the mitochondrion. Catalytic component of the GSH degradosomal complex involved in the degradation of glutathione (GSH) and other peptides containing a gamma-glu-X bond. Also functions in a DUG2-DUG3-independent manner as a dipeptidase with high specificity for Cys-Gly and no activity toward tri- or tetrapeptides. The sequence is that of Cys-Gly metallodipeptidase DUG1 (DUG1) from Saccharomyces cerevisiae (strain ATCC 204508 / S288c) (Baker's yeast).